Consider the following 51-residue polypeptide: Magnetosome protein Mms5 (51 aa).

Residues M1–S8 are Lumenal-facing. The tract at residues L9 to G16 is LG region. The chain crosses the membrane as a helical span at residues L9–A29. Residues G30 to V51 lie on the Cytoplasmic side of the membrane.

This sequence belongs to the magnetosome MamD/Mms5 family. Post-translationally, may undergo N-terminal cleavage.

The protein resides in the magnetosome membrane. Its function is as follows. Might be involved in magnetite crystal growth. This chain is Magnetosome protein Mms5, found in Magnetospirillum gryphiswaldense (strain DSM 6361 / JCM 21280 / NBRC 15271 / MSR-1).